The sequence spans 474 residues: tRNA-2-methylthio-N(6)-dimethylallyladenosine synthase (474 aa).

The MTTase N-terminal domain occupies 3–120 (KKLLIKTWGC…LPEMIKQSQS (118 aa)). C12, C49, C83, C157, C161, and C164 together coordinate [4Fe-4S] cluster. In terms of domain architecture, Radical SAM core spans 143–375 (RAEGATAFVS…QQQINAQAMR (233 aa)). The TRAM domain maps to 378 to 441 (RLMLGTEQRV…ANSLRGEIVR (64 aa)).

Belongs to the methylthiotransferase family. MiaB subfamily. Monomer. [4Fe-4S] cluster serves as cofactor.

It localises to the cytoplasm. It catalyses the reaction N(6)-dimethylallyladenosine(37) in tRNA + (sulfur carrier)-SH + AH2 + 2 S-adenosyl-L-methionine = 2-methylsulfanyl-N(6)-dimethylallyladenosine(37) in tRNA + (sulfur carrier)-H + 5'-deoxyadenosine + L-methionine + A + S-adenosyl-L-homocysteine + 2 H(+). In terms of biological role, catalyzes the methylthiolation of N6-(dimethylallyl)adenosine (i(6)A), leading to the formation of 2-methylthio-N6-(dimethylallyl)adenosine (ms(2)i(6)A) at position 37 in tRNAs that read codons beginning with uridine. The sequence is that of tRNA-2-methylthio-N(6)-dimethylallyladenosine synthase from Vibrio vulnificus (strain CMCP6).